Reading from the N-terminus, the 168-residue chain is Cell division inhibitor SulA (168 aa).

Residues 105–111 (ALQTGNY) form a ftsZ binding region.

This sequence belongs to the SulA family. As to quaternary structure, interacts with FtsZ. Post-translationally, is rapidly cleaved and degraded by the Lon protease once DNA damage is repaired.

In terms of biological role, component of the SOS system and an inhibitor of cell division. Accumulation of SulA causes rapid cessation of cell division and the appearance of long, non-septate filaments. In the presence of GTP, binds a polymerization-competent form of FtsZ in a 1:1 ratio, thus inhibiting FtsZ polymerization and therefore preventing it from participating in the assembly of the Z ring. This mechanism prevents the premature segregation of damaged DNA to daughter cells during cell division. The protein is Cell division inhibitor SulA of Erwinia pyrifoliae (strain DSM 12163 / CIP 106111 / Ep16/96).